A 250-amino-acid polypeptide reads, in one-letter code: Vacuolar iron transporter 1 (250 aa).

Residues 1–37 (MSSEEDKITRISIEPEKQTLLDHHTEKHFTAGEIVRD) lie on the Cytoplasmic side of the membrane. A helical membrane pass occupies residues 38 to 58 (IIIGVSDGLTVPFALAAGLSG). The Vacuolar portion of the chain corresponds to 59-64 (ANASSS). A helical transmembrane segment spans residues 65–85 (IVLTAGIAEVAAGAISMGLGG). Topologically, residues 86 to 169 (YLAAKSEEDH…PDPKRALQSA (84 aa)) are cytoplasmic. Positions 91-166 (SEEDHYAREM…LEKPDPKRAL (76 aa)) are cytoplasmic metal binding domain (MBD). Residues Glu103, Glu106, Glu114, Glu117, Met150, and Glu154 each contribute to the Fe cation site. Residues 170–190 (FTIAIAYVLGGFIPLLPYMLI) traverse the membrane as a helical segment. At 191–192 (PH) the chain is on the vacuolar side. Residues 193-213 (AMDAVVASVVITLFALFIFGY) traverse the membrane as a helical segment. Residues 214–227 (AKGHFTGSKPLRSA) lie on the Cytoplasmic side of the membrane. A helical transmembrane segment spans residues 228–248 (FETAFIGAIASAAAFCLAKVV). Topologically, residues 249–250 (QH) are vacuolar.

It belongs to the CCC1 family. Homodimer. The dimeric interaction is mediated by both the transmembrane domains (TMDs) and the cytoplasmic metal binding domain (MBD). In terms of tissue distribution, highly expressed in developing embryo and seed. Expressed in young seedlings, predominantly in the vasculature.

The protein resides in the vacuole membrane. The catalysed reaction is Fe(2+)(in) = Fe(2+)(out). In terms of biological role, vacuolar iron transporter involved in the transfer of iron ions from the cytosol to the vacuole for intracellular iron storage. Involved in regulation of cellular iron homeostasis. Vacuolar iron storage is required for seed embryo and seedling development. The polypeptide is Vacuolar iron transporter 1 (Arabidopsis thaliana (Mouse-ear cress)).